Consider the following 320-residue polypeptide: tRNA dimethylallyltransferase (320 aa).

17–24 (GPTASGKT) is an ATP binding site. 19 to 24 (TASGKT) contacts substrate. 3 interaction with substrate tRNA regions span residues 42–45 (DSAL), 166–170 (QRIQR), and 249–254 (RCVGYR).

It belongs to the IPP transferase family. As to quaternary structure, monomer. It depends on Mg(2+) as a cofactor.

It carries out the reaction adenosine(37) in tRNA + dimethylallyl diphosphate = N(6)-dimethylallyladenosine(37) in tRNA + diphosphate. Functionally, catalyzes the transfer of a dimethylallyl group onto the adenine at position 37 in tRNAs that read codons beginning with uridine, leading to the formation of N6-(dimethylallyl)adenosine (i(6)A). This Herminiimonas arsenicoxydans protein is tRNA dimethylallyltransferase.